A 326-amino-acid chain; its full sequence is ATPase GET3 (326 aa).

32–39 (KGGVGKTT) is an ATP binding site. Aspartate 61 is an active-site residue. Glutamate 244 and asparagine 271 together coordinate ATP. 2 residues coordinate Zn(2+): cysteine 282 and cysteine 285.

This sequence belongs to the arsA ATPase family. As to quaternary structure, homodimer.

The protein resides in the cytoplasm. The protein localises to the endoplasmic reticulum. Its function is as follows. ATPase required for the post-translational delivery of tail-anchored (TA) proteins to the endoplasmic reticulum. Recognizes and selectively binds the transmembrane domain of TA proteins in the cytosol. This complex then targets to the endoplasmic reticulum by membrane-bound receptors, where the tail-anchored protein is released for insertion. This process is regulated by ATP binding and hydrolysis. ATP binding drives the homodimer towards the closed dimer state, facilitating recognition of newly synthesized TA membrane proteins. ATP hydrolysis is required for insertion. Subsequently, the homodimer reverts towards the open dimer state, lowering its affinity for the membrane-bound receptor, and returning it to the cytosol to initiate a new round of targeting. The sequence is that of ATPase GET3 from Phaeosphaeria nodorum (strain SN15 / ATCC MYA-4574 / FGSC 10173) (Glume blotch fungus).